Reading from the N-terminus, the 254-residue chain is Major prion protein (254 aa).

Positions 1-28 (MANLGYWLLALFVTTCTDVGLCKKRPKP) are cleaved as a signal peptide. Residues 23–38 (KKRPKPGGWNTGGSRY) are interaction with ADGRG6. The interaction with GRB2, ERI3 and SYN1 stretch occupies residues 23–231 (KKRPKPGGWN…SQAYYDGRRS (209 aa)). The tract at residues 24-107 (KRPKPGGWNT…QWNKPSKPKT (84 aa)) is disordered. 5 consecutive repeat copies span residues 51–59 (PQSGGTWGQ), 60–67 (PHGGGWGQ), 68–75 (PHGGGWGQ), 76–83 (PHGGGWGQ), and 84–91 (PHGGGWSQ). The interval 51-91 (PQSGGTWGQPHGGGWGQPHGGGWGQPHGGGWGQPHGGGWSQ) is 5 X 8 AA tandem repeats of P-H-G-G-G-W-G-Q. The span at 55 to 95 (GTWGQPHGGGWGQPHGGGWGQPHGGGWGQPHGGGWSQGGGT) shows a compositional bias: gly residues. Histidine 61, glycine 62, glycine 63, histidine 69, glycine 70, glycine 71, histidine 77, glycine 78, glycine 79, histidine 85, glycine 86, and glycine 87 together coordinate Cu(2+). A disulfide bond links cysteine 179 and cysteine 214. N-linked (GlcNAc...) asparagine glycosylation is found at asparagine 181 and asparagine 197. A lipid anchor (GPI-anchor amidated serine) is attached at serine 231. The propeptide at 232 to 254 (SAVLFSSPPVILLISFLIFLIVG) is removed in mature form.

This sequence belongs to the prion family. Monomer and homodimer. Has a tendency to aggregate into amyloid fibrils containing a cross-beta spine, formed by a steric zipper of superposed beta-strands. Soluble oligomers may represent an intermediate stage on the path to fibril formation. Copper binding may promote oligomerization. Interacts with GRB2, APP, ERI3/PRNPIP and SYN1. Mislocalized cytosolically exposed PrP interacts with MGRN1; this interaction alters MGRN1 subcellular location and causes lysosomal enlargement. Interacts with APP. Interacts with KIAA1191. Interacts with ADGRG6.

The protein localises to the cell membrane. The protein resides in the golgi apparatus. Its primary physiological function is unclear. May play a role in neuronal development and synaptic plasticity. May be required for neuronal myelin sheath maintenance. May promote myelin homeostasis through acting as an agonist for ADGRG6 receptor. May play a role in iron uptake and iron homeostasis. Soluble oligomers are toxic to cultured neuroblastoma cells and induce apoptosis (in vitro). Association with GPC1 (via its heparan sulfate chains) targets PRNP to lipid rafts. Also provides Cu(2+) or Zn(2+) for the ascorbate-mediated GPC1 deaminase degradation of its heparan sulfate side chains. The polypeptide is Major prion protein (Prnp) (Rattus norvegicus (Rat)).